We begin with the raw amino-acid sequence, 433 residues long: GTPase Der (433 aa).

EngA-type G domains follow at residues 5-167 and 174-349; these read KKVL…GRVN and IKVG…DQLE. GTP-binding positions include 11–18, 58–62, 119–122, 180–187, 227–231, and 292–295; these read GRPNVGKS, DTGGF, NKVD, GKPNSGKS, DTAGI, and SKWD. In terms of domain architecture, KH-like spans 349-429; sequence ELKTNTPDLN…PILVELREKI (81 aa).

This sequence belongs to the TRAFAC class TrmE-Era-EngA-EngB-Septin-like GTPase superfamily. EngA (Der) GTPase family. Associates with the 50S ribosomal subunit.

In terms of biological role, GTPase that plays an essential role in the late steps of ribosome biogenesis. The polypeptide is GTPase Der (Borrelia garinii subsp. bavariensis (strain ATCC BAA-2496 / DSM 23469 / PBi) (Borreliella bavariensis)).